Reading from the N-terminus, the 130-residue chain is MPKPSKKINLRKIKKKVPKGVIHIQASFNNTIVTITDVRGQVISWSSAGACGFKGAKKSTPFAAQTAAEKALRPLIDQGMRQAEVMISGPGRGRDTALRIIRKSGITLNFVRDVTPIPHNGCRPPSKRRV.

This sequence belongs to the universal ribosomal protein uS11 family. In terms of assembly, part of the 30S ribosomal subunit.

Its subcellular location is the plastid. It localises to the chloroplast. The polypeptide is Small ribosomal subunit protein uS11c (Chaetosphaeridium globosum (Charophycean green alga)).